We begin with the raw amino-acid sequence, 358 residues long: MEQIQVELGVRSYPIFIGQNLLENSDYFSSYLQGKKILIVTNDTIAPLYLAKVQALLASYQCADPVILPDGEQYKTLSQMDAIFTSLLAQNMGRDSVLIALGGGVIGDMTGFAAACYQRGVDFIQIPTTLLSQVDSSVGGKTAVNHPMGKNMIGAFYQPKMVAIDTACLHTLPAREFAAGMAEVIKYGIIWDGSFFSWLEQNVAALKSLDEAALTYAIAKCCQIKADVVAQDETEQGVRALLNLGHTFGHAIEAEMGYGVWLHGEAVAAGTVLAAQTASKMGLVDQSIVCRIEAIFEAFDLPTEAPEAMDFEQFIKHMRRDKKVLNGKLRLVLPKAIGQAEVYGEVSESLLQEVISRA.

Residues 70–75 (DGEQYK), 104–108 (GVIGD), 128–129 (TT), lysine 141, lysine 150, and 168–171 (CLHT) each bind NAD(+). Positions 183, 246, and 263 each coordinate Zn(2+).

This sequence belongs to the sugar phosphate cyclases superfamily. Dehydroquinate synthase family. Co(2+) is required as a cofactor. Zn(2+) serves as cofactor. Requires NAD(+) as cofactor.

The protein resides in the cytoplasm. The enzyme catalyses 7-phospho-2-dehydro-3-deoxy-D-arabino-heptonate = 3-dehydroquinate + phosphate. Its pathway is metabolic intermediate biosynthesis; chorismate biosynthesis; chorismate from D-erythrose 4-phosphate and phosphoenolpyruvate: step 2/7. Catalyzes the conversion of 3-deoxy-D-arabino-heptulosonate 7-phosphate (DAHP) to dehydroquinate (DHQ). The protein is 3-dehydroquinate synthase of Shewanella loihica (strain ATCC BAA-1088 / PV-4).